The chain runs to 405 residues: Tryptophan synthase beta chain (405 aa).

An N6-(pyridoxal phosphate)lysine modification is found at Lys98.

The protein belongs to the TrpB family. In terms of assembly, tetramer of two alpha and two beta chains. Requires pyridoxal 5'-phosphate as cofactor.

The catalysed reaction is (1S,2R)-1-C-(indol-3-yl)glycerol 3-phosphate + L-serine = D-glyceraldehyde 3-phosphate + L-tryptophan + H2O. Its pathway is amino-acid biosynthesis; L-tryptophan biosynthesis; L-tryptophan from chorismate: step 5/5. Its function is as follows. The beta subunit is responsible for the synthesis of L-tryptophan from indole and L-serine. This Xanthomonas oryzae pv. oryzae (strain PXO99A) protein is Tryptophan synthase beta chain.